The chain runs to 391 residues: Transaldolase (391 aa).

Lysine 134 serves as the catalytic Schiff-base intermediate with substrate. EF-hand domains are found at residues 329-364 and 365-387; these read TLTH…FDAL and DANH…VLHL. Positions 342, 344, 346, 353, 365, 367, 369, 371, and 376 each coordinate Ca(2+).

It belongs to the transaldolase family. Type 1 subfamily.

The protein resides in the cytoplasm. It catalyses the reaction D-sedoheptulose 7-phosphate + D-glyceraldehyde 3-phosphate = D-erythrose 4-phosphate + beta-D-fructose 6-phosphate. It participates in carbohydrate degradation; pentose phosphate pathway; D-glyceraldehyde 3-phosphate and beta-D-fructose 6-phosphate from D-ribose 5-phosphate and D-xylulose 5-phosphate (non-oxidative stage): step 2/3. In terms of biological role, transaldolase is important for the balance of metabolites in the pentose-phosphate pathway. In Thermosynechococcus vestitus (strain NIES-2133 / IAM M-273 / BP-1), this protein is Transaldolase.